The primary structure comprises 557 residues: Polypyrimidine tract-binding protein 1 (557 aa).

Residue methionine 1 is modified to N-acetylmethionine. Position 16 is a phosphoserine (serine 16). RRM domains are found at residues 59-143 (RVIH…SSPN), 184-260 (LRII…FSKL), and 363-437 (SVLL…LSKH). Lysine 65 participates in a covalent cross-link: Glycyl lysine isopeptide (Lys-Gly) (interchain with G-Cter in SUMO2). The residue at position 127 (tyrosine 127) is a Phosphotyrosine. Position 138 is a phosphothreonine (threonine 138). Serine 141 is modified (phosphoserine). Residue lysine 218 forms a Glycyl lysine isopeptide (Lys-Gly) (interchain with G-Cter in SUMO2) linkage. At serine 459 the chain carries Phosphoserine. Positions 480-555 (ATLHLSNIPP…HHLRVSFSKS (76 aa)) constitute an RRM 4 domain.

Monomer. Part of a ternary complex containing KHSRP, PTBP1, PTBP2 and HNRPH1. Interacts with RAVER1 and SFPQ. Interacts with IVNS1ABP (via BACK domain); the interaction is direct.

The protein localises to the nucleus. Its function is as follows. Plays a role in pre-mRNA splicing and in the regulation of alternative splicing events. Activates exon skipping of its own pre-mRNA during muscle cell differentiation. Binds to the polypyrimidine tract of introns. May promote RNA looping when bound to two separate polypyrimidine tracts in the same pre-mRNA. May promote the binding of U2 snRNP to pre-mRNA. Cooperates with RAVER1 to modulate switching between mutually exclusive exons during maturation of the TPM1 pre-mRNA. Represses the splicing of MAPT/Tau exon 10. Binds to polypyrimidine-rich controlling element (PCE) of CFTR and promotes exon skipping of CFTR exon 9, thereby antagonizing TIA1 and its role in exon inclusion of CFTR exon 9. Plays a role in the splicing of pyruvate kinase PKM by binding repressively to a polypyrimidine tract flanking PKM exon 9, inhibiting exon 9 inclusion and resulting in exon 10 inclusion and production of the PKM M2 isoform. In case of infection by picornaviruses, binds to the viral internal ribosome entry site (IRES) and stimulates the IRES-mediated translation. This is Polypyrimidine tract-binding protein 1 (PTBP1) from Homo sapiens (Human).